Consider the following 892-residue polypeptide: MEINHDYRVKLFDELGFERKQCTECNQWFWTLDKDRTTCGDSPCDEYSFIGSPITRKKYTYNEMVREFTNFFAEKGHSPVKRSPVVAKRWRDDILLTIASIAVFQPWVTNGLVKPVKNPLVIAQPCIRLNDIDNVGRTGRHLTCFTMGAHHAFNSKDDYKYWTDKTVEYCFELMNRLGIDGKTITFIESWWEGGGNAGPCYEVITHGVELATLVFMQYKKVGSEYEEIPLKIVDTGYGIERFAWASQGTPTVYESLFSEVIEKLKEDAGIPGVDEKIMAESATLAGLMDIENVGDLRVLRQKVAEKIGMDVDELDKLISPLEYIYAIADHTRCLSFMFGDGIVPSNVKEGYLARLVLRKTLRYMEKIGISMSIKDIISMQLENMKEIYPELSEMKEYIMDVLDSEEKKYIQTVNRGRGIVERMAASKSEITLDDLIELYDSNGLPPEIVKDVVDELNKKGKKTIAITVPDNFYTIVAERHEEEKPEEVVSTKKELPEVEVSETELLFFKHPTQVEFEAKVLKTVEKYVVLDKTLFYAEGGGQKYDIGQINGIEVIDVQKKNGIVFHKVSDISKFKEGDIVKGTVNWENRLKLMRNHTATHVINAAATRVLGKHIWQTGSNVDTEKGRLDITHYERISREQVKEIERIANEIVLSKMPVNSTFMDRNDAEQKYGFTIYQGGVVPGDTLRIIEIEGTDVEACGGTHCSNTSEIGYIKVLKTERIQDGVERLEYSTGMGSVSEIAVLEDTLIDSAEILGIPNDQLPKTVKRFFEEWKEQKKTIEELQKKVGELVKYELADKFEKYGNYEVLVEQVSGTPNELMSIADNLAVGNKLIVLMNENDYLLCKRGENVELSMKELIRNIGKGGGKDNLAQGKYSENKEQITEKIIQILNK.

Residues His596, His600, Cys700, and His704 each contribute to the Zn(2+) site.

This sequence belongs to the class-II aminoacyl-tRNA synthetase family. Zn(2+) is required as a cofactor.

Its subcellular location is the cytoplasm. It catalyses the reaction tRNA(Ala) + L-alanine + ATP = L-alanyl-tRNA(Ala) + AMP + diphosphate. Its function is as follows. Catalyzes the attachment of alanine to tRNA(Ala) in a two-step reaction: alanine is first activated by ATP to form Ala-AMP and then transferred to the acceptor end of tRNA(Ala). Also edits incorrectly charged Ser-tRNA(Ala) and Gly-tRNA(Ala) via its editing domain. In Methanococcus maripaludis (strain C7 / ATCC BAA-1331), this protein is Alanine--tRNA ligase.